We begin with the raw amino-acid sequence, 874 residues long: Alanine--tRNA ligase (874 aa).

Zn(2+)-binding residues include His-563, His-567, Cys-665, and His-669.

It belongs to the class-II aminoacyl-tRNA synthetase family. The cofactor is Zn(2+).

It is found in the cytoplasm. The enzyme catalyses tRNA(Ala) + L-alanine + ATP = L-alanyl-tRNA(Ala) + AMP + diphosphate. Its function is as follows. Catalyzes the attachment of alanine to tRNA(Ala) in a two-step reaction: alanine is first activated by ATP to form Ala-AMP and then transferred to the acceptor end of tRNA(Ala). Also edits incorrectly charged Ser-tRNA(Ala) and Gly-tRNA(Ala) via its editing domain. The protein is Alanine--tRNA ligase of Histophilus somni (strain 129Pt) (Haemophilus somnus).